A 505-amino-acid chain; its full sequence is ATP synthase subunit alpha (505 aa).

170-177 (GDRQTGKS) lines the ATP pocket.

The protein belongs to the ATPase alpha/beta chains family. As to quaternary structure, F-type ATPases have 2 components, CF(1) - the catalytic core - and CF(0) - the membrane proton channel. CF(1) has five subunits: alpha(3), beta(3), gamma(1), delta(1), epsilon(1). CF(0) has four main subunits: a(1), b(1), b'(1) and c(9-12).

It is found in the cellular thylakoid membrane. It catalyses the reaction ATP + H2O + 4 H(+)(in) = ADP + phosphate + 5 H(+)(out). Produces ATP from ADP in the presence of a proton gradient across the membrane. The alpha chain is a regulatory subunit. The sequence is that of ATP synthase subunit alpha from Prochlorococcus marinus (strain MIT 9312).